The sequence spans 187 residues: 1,6-anhydro-N-acetylmuramyl-L-alanine amidase AmpD (187 aa).

The 139-residue stretch at 29–167 (TLLVVHNISL…APERKTDPGP (139 aa)) folds into the N-acetylmuramoyl-L-alanine amidase domain. His34 serves as a coordination point for Zn(2+). The Proton acceptor role is filled by Glu116. Residues His154 and Asp164 each contribute to the Zn(2+) site.

This sequence belongs to the N-acetylmuramoyl-L-alanine amidase 2 family. Zn(2+) is required as a cofactor.

Its subcellular location is the cytoplasm. The enzyme catalyses Hydrolyzes the link between N-acetylmuramoyl residues and L-amino acid residues in certain cell-wall glycopeptides.. Involved in cell wall peptidoglycan recycling. Specifically cleaves the amide bond between the lactyl group of N-acetylmuramic acid and the alpha-amino group of the L-alanine in degradation products containing an anhydro N-acetylmuramyl moiety. In Enterobacter cloacae, this protein is 1,6-anhydro-N-acetylmuramyl-L-alanine amidase AmpD.